The following is a 310-amino-acid chain: Porphobilinogen deaminase (310 aa).

An S-(dipyrrolylmethanemethyl)cysteine modification is found at Cys-241.

It belongs to the HMBS family. Monomer. The cofactor is dipyrromethane.

It carries out the reaction 4 porphobilinogen + H2O = hydroxymethylbilane + 4 NH4(+). It functions in the pathway porphyrin-containing compound metabolism; protoporphyrin-IX biosynthesis; coproporphyrinogen-III from 5-aminolevulinate: step 2/4. Its function is as follows. Tetrapolymerization of the monopyrrole PBG into the hydroxymethylbilane pre-uroporphyrinogen in several discrete steps. The polypeptide is Porphobilinogen deaminase (Pelobacter propionicus (strain DSM 2379 / NBRC 103807 / OttBd1)).